We begin with the raw amino-acid sequence, 446 residues long: tRNA modification GTPase MnmE (446 aa).

Residues Arg-21, Glu-77, and Lys-116 each coordinate (6S)-5-formyl-5,6,7,8-tetrahydrofolate. The TrmE-type G domain occupies 212–370; the sequence is GFRIALIGAP…LRAALASHVA (159 aa). Asn-222 is a binding site for K(+). GTP-binding positions include 222 to 227, 241 to 247, and 266 to 269; these read NAGKST, TDVAGTT, and DTAG. Residue Ser-226 participates in Mg(2+) binding. Residues Thr-241, Val-243, and Thr-246 each contribute to the K(+) site. Thr-247 lines the Mg(2+) pocket. Lys-446 contacts (6S)-5-formyl-5,6,7,8-tetrahydrofolate.

The protein belongs to the TRAFAC class TrmE-Era-EngA-EngB-Septin-like GTPase superfamily. TrmE GTPase family. Homodimer. Heterotetramer of two MnmE and two MnmG subunits. Requires K(+) as cofactor.

The protein resides in the cytoplasm. Functionally, exhibits a very high intrinsic GTPase hydrolysis rate. Involved in the addition of a carboxymethylaminomethyl (cmnm) group at the wobble position (U34) of certain tRNAs, forming tRNA-cmnm(5)s(2)U34. This chain is tRNA modification GTPase MnmE, found in Caulobacter vibrioides (strain ATCC 19089 / CIP 103742 / CB 15) (Caulobacter crescentus).